The following is a 189-amino-acid chain: Shikimate kinase (189 aa).

11 to 16 (GTGKSA) lines the ATP pocket. Serine 15 provides a ligand contact to Mg(2+). Residues aspartate 33, arginine 57, and glycine 79 each coordinate substrate. Position 117 (arginine 117) interacts with ATP. Residue arginine 135 coordinates substrate.

The protein belongs to the shikimate kinase family. In terms of assembly, monomer. It depends on Mg(2+) as a cofactor.

It localises to the cytoplasm. The catalysed reaction is shikimate + ATP = 3-phosphoshikimate + ADP + H(+). It functions in the pathway metabolic intermediate biosynthesis; chorismate biosynthesis; chorismate from D-erythrose 4-phosphate and phosphoenolpyruvate: step 5/7. In terms of biological role, catalyzes the specific phosphorylation of the 3-hydroxyl group of shikimic acid using ATP as a cosubstrate. The sequence is that of Shikimate kinase from Desulforudis audaxviator (strain MP104C).